The sequence spans 136 residues: MADDKKSVKKEKKVKKKEKKIVPRGKVYITASFNNTIVTITDMAGNTISWSTSGAMGFRGSKKSTPYAAQIAAGNAAEKAMDSAGLQEVDVMVSGPGIGRESAIRSLVARGLNIKMIKDVTPLPHNGCRPRKRRRV.

The protein belongs to the universal ribosomal protein uS11 family. As to quaternary structure, part of the 30S ribosomal subunit. Interacts with proteins S7 and S18. Binds to IF-3.

Functionally, located on the platform of the 30S subunit, it bridges several disparate RNA helices of the 16S rRNA. Forms part of the Shine-Dalgarno cleft in the 70S ribosome. This Leptospira borgpetersenii serovar Hardjo-bovis (strain JB197) protein is Small ribosomal subunit protein uS11.